We begin with the raw amino-acid sequence, 950 residues long: Lon protease homolog, mitochondrial (950 aa).

Residues 1-65 (MAASTGYVRL…VPMGGGQWRG (65 aa)) constitute a mitochondrion transit peptide. 2 disordered regions span residues 67–94 (WDAGSRGGSDETSEGGVEDGATASSGEG) and 212–243 (PEGLEPEAENKQKSRRKLKRGKKEVGDELGAK). A Lon N-terminal domain is found at 112–360 (LPLIAISRNP…KALSLLKKEF (249 aa)). Residues 224-233 (KSRRKLKRGK) show a composition bias toward basic residues. 513–520 (GPPGVGKT) is an ATP binding site. Residues 749-939 (VTPPGVVMGL…RDIFRIAFPL (191 aa)) enclose the Lon proteolytic domain. Residues S845 and K888 contribute to the active site.

It belongs to the peptidase S16 family. As to quaternary structure, homohexamer. Organized in a ring with a central cavity. The ATP-binding and proteolytic domains (AP-domain) form a hexameric chamber, while the N-terminal domain is arranged as a trimer of dimers. DNA and RNA binding is stimulated by substrate and inhibited by ATP binding. Interacts with TWNK and mitochondrial DNA polymerase subunit POLG.

The protein resides in the mitochondrion matrix. The catalysed reaction is Hydrolysis of proteins in presence of ATP.. In terms of biological role, ATP-dependent serine protease that mediates the selective degradation of misfolded, unassembled or oxidatively damaged polypeptides as well as certain short-lived regulatory proteins in the mitochondrial matrix. Endogenous substrates include mitochondrial steroidogenic acute regulatory (StAR) protein, DELE1, helicase Twinkle (TWNK) and the large ribosomal subunit protein MRPL32/bL32m. MRPL32/bL32m is protected from degradation by LONP1 when it is bound to a nucleic acid (RNA), but TWNK is not. May also have a chaperone function in the assembly of inner membrane protein complexes. Participates in the regulation of mitochondrial gene expression and in the maintenance of the integrity of the mitochondrial genome. Binds to mitochondrial promoters and RNA in a single-stranded, site-specific, and strand-specific manner. May regulate mitochondrial DNA replication and/or gene expression using site-specific, single-stranded DNA binding to target the degradation of regulatory proteins binding to adjacent sites in mitochondrial promoters. In Rattus norvegicus (Rat), this protein is Lon protease homolog, mitochondrial (Lonp1).